Reading from the N-terminus, the 140-residue chain is Putative nickel-responsive regulator 2 (140 aa).

Positions 81, 92, 94, and 100 each coordinate Ni(2+).

Belongs to the transcriptional regulatory CopG/NikR family. The cofactor is Ni(2+).

Functionally, transcriptional regulator. This is Putative nickel-responsive regulator 2 from Methanosarcina acetivorans (strain ATCC 35395 / DSM 2834 / JCM 12185 / C2A).